The sequence spans 79 residues: Sec-independent protein translocase protein TatA (79 aa).

Residues 1–21 (MFSGISIWQLLILLAIVVLLF) traverse the membrane as a helical segment. 2 stretches are compositionally biased toward basic and acidic residues: residues 44-58 (MKDG…RLAD) and 66-79 (QDAE…KDKA). The interval 44–79 (MKDGEDEQDHKRLADDDQPQNKQDAEQKAEQEKDKA) is disordered.

The protein belongs to the TatA/E family. The Tat system comprises two distinct complexes: a TatABC complex, containing multiple copies of TatA, TatB and TatC subunits, and a separate TatA complex, containing only TatA subunits. Substrates initially bind to the TatABC complex, which probably triggers association of the separate TatA complex to form the active translocon.

It is found in the cell inner membrane. Functionally, part of the twin-arginine translocation (Tat) system that transports large folded proteins containing a characteristic twin-arginine motif in their signal peptide across membranes. TatA could form the protein-conducting channel of the Tat system. The sequence is that of Sec-independent protein translocase protein TatA from Alcanivorax borkumensis (strain ATCC 700651 / DSM 11573 / NCIMB 13689 / SK2).